The chain runs to 348 residues: D-alanine--D-alanine ligase (348 aa).

The ATP-grasp domain occupies 132–334 (KRVLESIGIP…YPDLIEELVT (203 aa)). 162–217 (LARLTFPIFVKPANMGSSVGISKAQTKVELRKAIQLALTYDSRVLIEQGVVAREIE) provides a ligand contact to ATP. Mg(2+)-binding residues include Asp288, Glu301, and Asn303.

The protein belongs to the D-alanine--D-alanine ligase family. It depends on Mg(2+) as a cofactor. The cofactor is Mn(2+).

It localises to the cytoplasm. It catalyses the reaction 2 D-alanine + ATP = D-alanyl-D-alanine + ADP + phosphate + H(+). It functions in the pathway cell wall biogenesis; peptidoglycan biosynthesis. Cell wall formation. This Streptococcus pyogenes serotype M12 (strain MGAS2096) protein is D-alanine--D-alanine ligase.